Here is a 359-residue protein sequence, read N- to C-terminus: UbiA prenyltransferase domain-containing protein 1 homolog (359 aa).

A compositionally biased stretch (polar residues) spans 1–16 (MATSSQLLPNGNLSRN). The disordered stretch occupies residues 1–23 (MATSSQLLPNGNLSRNGKTKTED). The next 8 membrane-spanning stretches (helical) occupy residues 67-89 (ALRPWSLSASLVPTLLGSALAYR), 98-118 (LATFFLTAFTVVTVHCAGNVV), 148-168 (VVSLGAILYMAGCGGFVLLAV), 177-197 (LALIYFGGLSSSFLYTGGIGF), 200-220 (IALGDLVILILFGPISVLFAF), 262-284 (IVTLAILIGRTASHVLYAMLLFA), 289-311 (FFIFGLKYSLWFLLPLVTLPQAF), and 335-355 (FFFGILYVVACCCAHQLPTFG).

It belongs to the UbiA prenyltransferase family.

It localises to the mitochondrion membrane. It participates in quinol/quinone metabolism; menaquinone biosynthesis. Functionally, prenyltransferase that mediates the formation of menaquinone-4 (MK-4), a vitamin K2 isoform, thereby acting as a mitochondrial electron carrier. Mediates the conversion of phylloquinone (PK) into MK-4, probably by cleaving the side chain of phylloquinone (PK) to release 2-methyl-1,4-naphthoquinone (menadione; K3) and then prenylating it with geranylgeranyl pyrophosphate (GGPP) to form MK-4. MK-4 acts as a membrane electron carrier downstream of a electron transport chain complex, improving mitochondrial oxygen consumption. This chain is UbiA prenyltransferase domain-containing protein 1 homolog (heix), found in Drosophila melanogaster (Fruit fly).